The sequence spans 282 residues: E3 ubiquitin-protein ligase SIAH1 (282 aa).

Residues 1–17 show a composition bias toward polar residues; sequence MSRQTATALPTGTSKCP. Residues 1–22 form a disordered region; sequence MSRQTATALPTGTSKCPPSQRV. A Phosphoserine; by ATM and ATR modification is found at Ser-19. Residues 41-76 form an RING-type zinc finger; it reads CPVCFDYVLPPILQCQSGHLVCSNCRPKLTCCPTCR. Residues 90–282 are SBD; it reads VANSVLFPCK…LGINVTISMC (193 aa). The SIAH-type zinc finger occupies 93 to 153; that stretch reads SVLFPCKYAS…VMPHLMHQHK (61 aa). Residues Cys-98, Cys-105, His-117, Cys-121, Cys-128, Cys-135, His-147, and His-152 each contribute to the Zn(2+) site.

This sequence belongs to the SINA (Seven in absentia) family. In terms of assembly, homodimer. Component of some large E3 complex composed of UBE2D1, SIAH1, CACYBP/SIP, SKP1, APC and TBL1X. Interacts with UBE2I. Interacts with alpha-tubulin. Interacts with PEG10, which may inhibit its activity. Interacts with PEG3 and HIPK2. Interacts with group 1 glutamate receptors GRM1 and GRM5. Interacts with DAB1, which may inhibit its activity. Interacts with UBE2E2. Interacts with SNCAIP. Interacts with HIPK2; the interaction is promoted by DAZAP2 and results in SIAH1-mediated ubiquitination and subsequent proteasomal degradation of HIPK2. Interacts with DAZAP2; the interaction is decreased following phosphorylation of DAZAP2 by HIPK2. Interacts with GAPDH; leading to stabilize SIAH1. Interacts with Bassoon/BSN and Piccolo/PLCO; these interactions negatively regulate SIAH1 E3 ligase activity. Interacts with DCC. Interacts with AXIN1; catalyzes AXIN1 ubiquitination and subsequent proteasome-mediated ubiquitin-dependent degradation. In terms of processing, phosphorylated on Ser-19 by ATM and ATR. This phosphorylation disrupts SIAH1 interaction with HIPK2, and subsequent proteasomal degradation of HIPK2.

The protein resides in the cytoplasm. Its subcellular location is the nucleus. The catalysed reaction is S-ubiquitinyl-[E2 ubiquitin-conjugating enzyme]-L-cysteine + [acceptor protein]-L-lysine = [E2 ubiquitin-conjugating enzyme]-L-cysteine + N(6)-ubiquitinyl-[acceptor protein]-L-lysine.. The protein operates within protein modification; protein ubiquitination. Functionally, E3 ubiquitin-protein ligase that mediates ubiquitination and subsequent proteasomal degradation of target proteins. E3 ubiquitin ligases accept ubiquitin from an E2 ubiquitin-conjugating enzyme in the form of a thioester and then directly transfers the ubiquitin to targeted substrates. Mediates E3 ubiquitin ligase activity either through direct binding to substrates or by functioning as the essential RING domain subunit of larger E3 complexes. Triggers the ubiquitin-mediated degradation of many substrates, including proteins involved in transcription regulation (ELL2, MYB, POU2AF1, PML and RBBP8), a cell surface receptor (DCC), cytoplasmic signal transduction molecules (KLF10/TIEG1 and NUMB), an antiapoptotic protein (BAG1), a microtubule motor protein (KIF22), a protein involved in synaptic vesicle function in neurons (SYP), a structural protein (CTNNB1) and SNCAIP. Confers constitutive instability to HIPK2 through proteasomal degradation. It is thereby involved in many cellular processes such as apoptosis, tumor suppression, cell cycle, axon guidance, transcription, spermatogenesis and TNF-alpha signaling. Has some overlapping function with SIAH2. Induces apoptosis in cooperation with PEG3. Upon nitric oxid (NO) generation that follows apoptotic stimulation, interacts with S-nitrosylated GAPDH, mediating the translocation of GAPDH to the nucleus. GAPDH acts as a stabilizer of SIAH1, facilitating the degradation of nuclear proteins. Mediates ubiquitination and degradation of EGLN2 and EGLN3 in response to the unfolded protein response (UPR), leading to their degradation and subsequent stabilization of ATF4. Also part of the Wnt signaling pathway in which it mediates the Wnt-induced ubiquitin-mediated proteasomal degradation of AXIN1. In Rattus norvegicus (Rat), this protein is E3 ubiquitin-protein ligase SIAH1 (Siah1).